Consider the following 419-residue polypeptide: Putative competence-damage inducible protein (419 aa).

Belongs to the CinA family.

This is Putative competence-damage inducible protein from Streptococcus agalactiae serotype Ia (strain ATCC 27591 / A909 / CDC SS700).